Here is a 346-residue protein sequence, read N- to C-terminus: 4-hydroxy-2-oxovalerate aldolase (346 aa).

Positions 8–260 (VILHDMSLRD…ETGIDLYKIM (253 aa)) constitute a Pyruvate carboxyltransferase domain. 16–17 (RD) is a substrate binding site. Mn(2+) is bound at residue D17. Residue H20 is the Proton acceptor of the active site. The substrate site is built by S170 and H199. Positions 199 and 201 each coordinate Mn(2+). Substrate is bound at residue Y290.

It belongs to the 4-hydroxy-2-oxovalerate aldolase family.

The enzyme catalyses (S)-4-hydroxy-2-oxopentanoate = acetaldehyde + pyruvate. The protein operates within aromatic compound metabolism; naphthalene degradation. The polypeptide is 4-hydroxy-2-oxovalerate aldolase (nahM) (Pseudomonas putida (Arthrobacter siderocapsulatus)).